Here is a 250-residue protein sequence, read N- to C-terminus: Purine nucleoside phosphorylase BQ2027_MB2173C (250 aa).

Zn(2+) contacts are provided by histidine 77, cysteine 114, and histidine 131.

Belongs to the purine nucleoside phosphorylase YfiH/LACC1 family. Homodimer. The cofactor is Cu(2+). Requires Zn(2+) as cofactor.

It catalyses the reaction adenosine + phosphate = alpha-D-ribose 1-phosphate + adenine. The enzyme catalyses S-methyl-5'-thioadenosine + phosphate = 5-(methylsulfanyl)-alpha-D-ribose 1-phosphate + adenine. It carries out the reaction inosine + phosphate = alpha-D-ribose 1-phosphate + hypoxanthine. The catalysed reaction is adenosine + H2O + H(+) = inosine + NH4(+). Functionally, purine nucleoside enzyme that catalyzes the phosphorolysis of adenosine and inosine nucleosides, yielding D-ribose 1-phosphate and the respective free bases, adenine and hypoxanthine. Also catalyzes the phosphorolysis of S-methyl-5'-thioadenosine into adenine and S-methyl-5-thio-alpha-D-ribose 1-phosphate. Also has adenosine deaminase activity. The protein is Purine nucleoside phosphorylase BQ2027_MB2173C of Mycobacterium bovis (strain ATCC BAA-935 / AF2122/97).